A 129-amino-acid chain; its full sequence is Keratin-associated protein 5-6 (129 aa).

A run of 6 repeats spans residues C28–P31, C34–P37, C40–P43, C90–P93, C109–P112, and C119–P122. The segment at C28–P112 is 6 X 4 AA repeats of C-C-X-P.

It belongs to the KRTAP type 5 family. Interacts with hair keratins. As to expression, expressed in hair root and not in skin. Expressed also in liver and skeletal muscle.

In the hair cortex, hair keratin intermediate filaments are embedded in an interfilamentous matrix, consisting of hair keratin-associated protein (KRTAP), which are essential for the formation of a rigid and resistant hair shaft through their extensive disulfide bond cross-linking with abundant cysteine residues of hair keratins. The matrix proteins include the high-sulfur and high-glycine-tyrosine keratins. The chain is Keratin-associated protein 5-6 (KRTAP5-6) from Homo sapiens (Human).